The chain runs to 313 residues: Ribosomal RNA small subunit methyltransferase H (313 aa).

S-adenosyl-L-methionine contacts are provided by residues 35-37, D55, F79, D101, and Q108; that span reads GGH.

This sequence belongs to the methyltransferase superfamily. RsmH family.

Its subcellular location is the cytoplasm. It carries out the reaction cytidine(1402) in 16S rRNA + S-adenosyl-L-methionine = N(4)-methylcytidine(1402) in 16S rRNA + S-adenosyl-L-homocysteine + H(+). In terms of biological role, specifically methylates the N4 position of cytidine in position 1402 (C1402) of 16S rRNA. In Escherichia coli O7:K1 (strain IAI39 / ExPEC), this protein is Ribosomal RNA small subunit methyltransferase H.